Here is a 454-residue protein sequence, read N- to C-terminus: Bifunctional protein GlmU (454 aa).

A pyrophosphorylase region spans residues 1–227 (MKKLSVVILA…KMEVEGANNR (227 aa)). UDP-N-acetyl-alpha-D-glucosamine-binding positions include 9 to 12 (LAAG), Lys-23, Gln-74, 79 to 80 (GT), 101 to 103 (YGD), Gly-138, Glu-152, Asn-167, and Asn-225. Residue Asp-103 participates in Mg(2+) binding. Asn-225 is a Mg(2+) binding site. The tract at residues 228-248 (LQLAALERYYQHKQAERLLLE) is linker. Positions 249–454 (GVMLIDPARF…AGWQRPTKKK (206 aa)) are N-acetyltransferase. UDP-N-acetyl-alpha-D-glucosamine-binding residues include Arg-331 and Lys-349. The active-site Proton acceptor is His-361. Residues Tyr-364 and Asn-375 each contribute to the UDP-N-acetyl-alpha-D-glucosamine site. Residues Ala-378, 384 to 385 (NY), Ser-403, Ala-421, and Arg-438 each bind acetyl-CoA.

The protein in the N-terminal section; belongs to the N-acetylglucosamine-1-phosphate uridyltransferase family. This sequence in the C-terminal section; belongs to the transferase hexapeptide repeat family. Homotrimer. Mg(2+) serves as cofactor.

It localises to the cytoplasm. The catalysed reaction is alpha-D-glucosamine 1-phosphate + acetyl-CoA = N-acetyl-alpha-D-glucosamine 1-phosphate + CoA + H(+). The enzyme catalyses N-acetyl-alpha-D-glucosamine 1-phosphate + UTP + H(+) = UDP-N-acetyl-alpha-D-glucosamine + diphosphate. The protein operates within nucleotide-sugar biosynthesis; UDP-N-acetyl-alpha-D-glucosamine biosynthesis; N-acetyl-alpha-D-glucosamine 1-phosphate from alpha-D-glucosamine 6-phosphate (route II): step 2/2. Its pathway is nucleotide-sugar biosynthesis; UDP-N-acetyl-alpha-D-glucosamine biosynthesis; UDP-N-acetyl-alpha-D-glucosamine from N-acetyl-alpha-D-glucosamine 1-phosphate: step 1/1. It participates in bacterial outer membrane biogenesis; LPS lipid A biosynthesis. Its function is as follows. Catalyzes the last two sequential reactions in the de novo biosynthetic pathway for UDP-N-acetylglucosamine (UDP-GlcNAc). The C-terminal domain catalyzes the transfer of acetyl group from acetyl coenzyme A to glucosamine-1-phosphate (GlcN-1-P) to produce N-acetylglucosamine-1-phosphate (GlcNAc-1-P), which is converted into UDP-GlcNAc by the transfer of uridine 5-monophosphate (from uridine 5-triphosphate), a reaction catalyzed by the N-terminal domain. The protein is Bifunctional protein GlmU of Mannheimia succiniciproducens (strain KCTC 0769BP / MBEL55E).